Here is a 368-residue protein sequence, read N- to C-terminus: Ubl carboxyl-terminal hydrolase 18 (368 aa).

The segment at methionine 31–proline 48 is mediates interaction with IFNAR2. The interval proline 48–aspartate 109 is mediates interaction with STAT2. Positions valine 52–threonine 366 constitute a USP domain. Catalysis depends on cysteine 61, which acts as the Nucleophile. Residues glutamate 299–glycine 308 form a mediates interaction with STAT2 and necessary for the negative regulation of the type I IFN signaling pathway region. The segment at methionine 309–serine 368 is mediates interaction with IFNAR2. The active-site Proton acceptor is histidine 314.

Belongs to the peptidase C19 family. Interacts with STAT2; the interaction is direct. Interacts with IFNAR2; indirectly via STAT2, it negatively regulates the assembly of the ternary interferon-IFNAR1-IFNAR2 complex and inhibits type I interferon signaling. Interacts with STING1. Interacts with USP20.

The catalysed reaction is Thiol-dependent hydrolysis of ester, thioester, amide, peptide and isopeptide bonds formed by the C-terminal Gly of ubiquitin (a 76-residue protein attached to proteins as an intracellular targeting signal).. Its function is as follows. Interferon-induced ISG15-specific protease that plays a crucial role for maintaining a proper balance of ISG15-conjugated proteins in cells. Regulates protein ISGylation by efficiently cleaving ISG15 conjugates linked via isopeptide bonds. Regulates T-cell activation and T-helper 17 (Th17) cell differentiation by deubiquitinating TAK1, likely to keep TAK1-TAB complexes in steady conditions. In turn, restricts activation of NF-kappa-B, NFAT, and JNK as well as expression of IL2 in T-cells after TCR activation. Acts as a molecular adapter with USP20 to promote innate antiviral response through deubiquitinating STING1. Involved also in the negative regulation of the inflammatory response triggered by type I interferon. Upon recruitment by STAT2 to the type I interferon receptor subunit IFNAR2 interferes with the assembly of the ternary interferon-IFNAR1-IFNAR2 complex and acts as a negative regulator of the type I interferon signaling pathway. The chain is Ubl carboxyl-terminal hydrolase 18 (Usp18) from Mus musculus (Mouse).